Consider the following 207-residue polypeptide: Small ribosomal subunit protein uS4c (207 aa).

Residues 92–155 (MRLDNILFRL…TYQSILSKRI (64 aa)) form the S4 RNA-binding domain.

It belongs to the universal ribosomal protein uS4 family. Part of the 30S ribosomal subunit. Contacts protein S5. The interaction surface between S4 and S5 is involved in control of translational fidelity.

It is found in the plastid. The protein localises to the chloroplast. Functionally, one of the primary rRNA binding proteins, it binds directly to 16S rRNA where it nucleates assembly of the body of the 30S subunit. In terms of biological role, with S5 and S12 plays an important role in translational accuracy. This Equisetum giganteum (Giant horsetail) protein is Small ribosomal subunit protein uS4c (rps4).